The primary structure comprises 90 residues: Acylphosphatase (90 aa).

The region spanning 4–90 is the Acylphosphatase-like domain; that stretch reads CVRVRVSGRV…KGHDDFKIIY (87 aa). Catalysis depends on residues arginine 19 and asparagine 37.

Belongs to the acylphosphatase family.

The catalysed reaction is an acyl phosphate + H2O = a carboxylate + phosphate + H(+). The polypeptide is Acylphosphatase (acyP) (Methanothrix thermoacetophila (strain DSM 6194 / JCM 14653 / NBRC 101360 / PT) (Methanosaeta thermophila)).